A 118-amino-acid polypeptide reads, in one-letter code: DNA-binding protein inhibitor ID-3-B (118 aa).

Positions 32-84 (SLKGAGIDETMGLLYDMNGCYSKLKELVPGIPQGSKLSQVEILQHVIDYIFDL) constitute a bHLH domain.

Homodimer. Heterodimer with other HLH proteins. Interacts (via HLH domain) with the bHLH protein hes4/hairy2 (via Orange domain). Interacts with stat3.

The protein resides in the nucleus. In terms of biological role, transcriptional regulator (lacking a basic DNA binding domain) which negatively regulates the basic helix-loop-helix (bHLH) transcription factors by forming heterodimers and inhibiting their DNA binding and transcriptional activity. Influences cell fate decisions in the embryo by sequestering and blocking the activity of the bHLH transcription factors that control these decisions. Inhibits the binding of myogenic bHLH-containing complexes to E-box DNA, thereby preventing activation of muscle-specific target genes. Also inhibits the activity of neurogenic factor neurod1/neuroD. Plays a role in cell cycle progression and survival of neural crest progenitors; binding to either hes4-B/hairy2b or stat3 blocks the formation of transcription factor complexes and the repressor function of hes4-B/hairy2B, to allow neural crest progenitors to differentiate. May play a role in the regulation of the circadian rhythm. The chain is DNA-binding protein inhibitor ID-3-B (id3-b) from Xenopus laevis (African clawed frog).